We begin with the raw amino-acid sequence, 408 residues long: Peptidase T (408 aa).

Residue H78 participates in Zn(2+) binding. D80 is an active-site residue. A Zn(2+)-binding site is contributed by D140. E173 serves as the catalytic Proton acceptor. Residues E174, D196, and H379 each contribute to the Zn(2+) site.

It belongs to the peptidase M20B family. The cofactor is Zn(2+).

The protein localises to the cytoplasm. It carries out the reaction Release of the N-terminal residue from a tripeptide.. Cleaves the N-terminal amino acid of tripeptides. The polypeptide is Peptidase T (Escherichia coli O6:K15:H31 (strain 536 / UPEC)).